The sequence spans 142 residues: Universal stress protein C (142 aa).

Belongs to the universal stress protein A family.

Its subcellular location is the cytoplasm. Functionally, required for resistance to DNA-damaging agents. The protein is Universal stress protein C (uspC) of Escherichia coli (strain K12).